Here is a 103-residue protein sequence, read N- to C-terminus: Large ribosomal subunit protein bL21 (103 aa).

Belongs to the bacterial ribosomal protein bL21 family. As to quaternary structure, part of the 50S ribosomal subunit. Contacts protein L20.

Functionally, this protein binds to 23S rRNA in the presence of protein L20. In Clostridium beijerinckii (strain ATCC 51743 / NCIMB 8052) (Clostridium acetobutylicum), this protein is Large ribosomal subunit protein bL21.